A 298-amino-acid polypeptide reads, in one-letter code: MAPSQLPPMFNPTPQDIEMLLAAQCHLGSKNLQVHMEPYLWKTRPDGVNVINIGKTWEKILLAARIIAAIDNPADICVISARPYGQRAVLKFASHTGATAIAGRFTPGNFTNYITRSFKEPRLIIVTDPRTDAQAIKEASYVNIPVIALCDTDSPTDFVDVAIPTNNKGRHAIGLVWWLLAREVLRLRGTLANRETEWDVVVDLYFYRDPEAEENKEIAEETKVPGAEEIGAGAVESGFAGENWDTQAPGAGVPGSAFAAASAAAATSWEADGGDWAASSAPPAGESWAETQPTEAKW.

The disordered stretch occupies residues 240 to 298 (AGENWDTQAPGAGVPGSAFAAASAAAATSWEADGGDWAASSAPPAGESWAETQPTEAKW). Residues 248-271 (APGAGVPGSAFAAASAAAATSWEA) are compositionally biased toward low complexity. Residues 289–298 (AETQPTEAKW) show a composition bias toward polar residues.

It belongs to the universal ribosomal protein uS2 family. In terms of assembly, component of the small ribosomal subunit. Mature ribosomes consist of a small (40S) and a large (60S) subunit. The 40S subunit contains about 33 different proteins and 1 molecule of RNA (18S). The 60S subunit contains about 49 different proteins and 3 molecules of RNA (25S, 5.8S and 5S). Interacts with rps21.

Its subcellular location is the cytoplasm. Required for the assembly and/or stability of the 40S ribosomal subunit. Required for the processing of the 20S rRNA-precursor to mature 18S rRNA in a late step of the maturation of 40S ribosomal subunits. This is Small ribosomal subunit protein uS2 (rps0) from Aspergillus clavatus (strain ATCC 1007 / CBS 513.65 / DSM 816 / NCTC 3887 / NRRL 1 / QM 1276 / 107).